We begin with the raw amino-acid sequence, 113 residues long: Na(+)/H(+) antiporter subunit C1 (113 aa).

3 helical membrane passes run 1–21 (MEII…YLVL), 28–48 (IVMG…TMGG), and 72–92 (LILT…VLAF).

It belongs to the CPA3 antiporters (TC 2.A.63) subunit C family. As to quaternary structure, may form a heterooligomeric complex that consists of seven subunits: mnhA1, mnhB1, mnhC1, mnhD1, mnhE1, mnhF1 and mnhG1.

It is found in the cell membrane. In terms of biological role, mnh complex is a Na(+)/H(+) antiporter involved in Na(+) excretion. The sequence is that of Na(+)/H(+) antiporter subunit C1 (mnhC1) from Staphylococcus haemolyticus (strain JCSC1435).